Reading from the N-terminus, the 200-residue chain is ATP-dependent Clp protease proteolytic subunit 1 (200 aa).

The active-site Nucleophile is the serine 98. Histidine 123 is an active-site residue.

Belongs to the peptidase S14 family. As to quaternary structure, fourteen ClpP subunits assemble into 2 heptameric rings which stack back to back to give a disk-like structure with a central cavity, resembling the structure of eukaryotic proteasomes.

The protein resides in the cytoplasm. The catalysed reaction is Hydrolysis of proteins to small peptides in the presence of ATP and magnesium. alpha-casein is the usual test substrate. In the absence of ATP, only oligopeptides shorter than five residues are hydrolyzed (such as succinyl-Leu-Tyr-|-NHMec, and Leu-Tyr-Leu-|-Tyr-Trp, in which cleavage of the -Tyr-|-Leu- and -Tyr-|-Trp bonds also occurs).. In terms of biological role, cleaves peptides in various proteins in a process that requires ATP hydrolysis. Has a chymotrypsin-like activity. Plays a major role in the degradation of misfolded proteins. The sequence is that of ATP-dependent Clp protease proteolytic subunit 1 from Mycobacterium leprae (strain TN).